The primary structure comprises 608 residues: 2',5'-phosphodiesterase 12 (608 aa).

A mitochondrion-targeting transit peptide spans 1 to 16 (MWRLPGRSALRGVRSV). Basic residues predominate over residues 90–99 (AAKKSRKNRA). The segment at 90–111 (AAKKSRKNRAHSSGGAACEATG) is disordered. At S216 the chain carries Phosphoserine. Mg(2+) is bound by residues E350, D495, and N497. Residue D495 is the Proton donor/acceptor of the active site.

Belongs to the CCR4/nocturin family. Mg(2+) is required as a cofactor.

It is found in the mitochondrion matrix. It catalyses the reaction Exonucleolytic cleavage of poly(A) to 5'-AMP.. Its function is as follows. Enzyme that cleaves 2',5'-phosphodiester bond linking adenosines of the 5'-triphosphorylated oligoadenylates, triphosphorylated oligoadenylates referred as 2-5A modulates the 2-5A system. Degrades triphosphorylated 2-5A to produce AMP and ATP. Also cleaves 3',5'-phosphodiester bond of oligoadenylates. Plays a role as a negative regulator of the 2-5A system that is one of the major pathways for antiviral and antitumor functions induced by interferons (IFNs). Suppression of this enzyme increases cellular 2-5A levels and decreases viral replication in cultured small-airway epithelial cells. In Mus musculus (Mouse), this protein is 2',5'-phosphodiesterase 12 (Pde12).